Here is a 536-residue protein sequence, read N- to C-terminus: Pre-mRNA 3'-end-processing factor FIP1 (536 aa).

Basic and acidic residues-rich tracts occupy residues 1–10 and 32–42; these read MSAGEVERLV and VHVHSDLAKDL. 3 disordered regions span residues 1 to 95, 212 to 246, and 300 to 536; these read MSAG…EDDV, VQQG…GLPP, and FPPG…APAE. Positions 1 to 110 are sufficient for interaction with PAPOLA; the sequence is MSAGEVERLV…DIKTGAPQYG (110 aa). The segment at 1 to 296 is necessary for stimulating PAPOLA activity; that stretch reads MSAGEVERLV…TEVDNNFSKP (296 aa). Composition is skewed to acidic residues over residues 43–54 and 80–94; these read DENEVERPEEEN and TEDD…DEDD. Phosphoserine occurs at positions 84, 86, and 88. The segment at 136–219 is sufficient for interaction with CPSF4; the sequence is KGVDLDAPGS…ITVQQGRTGN (84 aa). Residues 300–344 show a composition bias toward pro residues; sequence FPPGAPPTHLPPPPFLPPPPTVSTAPPLIPPPGFPPPPGAPPPSL. Tyr366 bears the Phosphotyrosine mark. The span at 374-390 shows a compositional bias: polar residues; the sequence is LTSSAPSWPSLVDTTKQ. The interval 383–536 is sufficient for interaction with CPSF1 and CSTF3; that stretch reads SLVDTTKQWD…QESTEAAPAE (154 aa). Residues 394-434 show a composition bias toward basic and acidic residues; the sequence is YARREKDRDRDRERDRDRERERDRDRERERTRERERERDHS. An arg/Asp/Glu-rich domain region spans residues 397 to 432; it reads REKDRDRDRERDRDRERERDRDRERERTRERERERD. Ser434 is subject to Phosphoserine. Thr436 bears the Phosphothreonine mark. Phosphoserine is present on residues Ser438 and Ser442. Residues 443-470 are compositionally biased toward basic and acidic residues; the sequence is DEERYRYREYAERGYERHRASREKEERH. The segment covering 484-493 has biased composition (basic residues); that stretch reads KSSRSNSRRR. Residue Ser496 is modified to Phosphoserine. The segment covering 502–512 has biased composition (basic residues); that stretch reads HRRHKHKKSKR.

Belongs to the FIP1 family. Component of the cleavage and polyadenylation specificity factor (CPSF) complex, composed of CPSF1, CPSF2, CPSF3, CPSF4 and FIP1L1. Found in a complex with CPSF1, FIP1L1 and PAPOLA. Interacts with CPSF1, CPSF4, CSTF2 and CSTF3. Interacts with AHCYL1 (when phosphorylated); the interaction is direct and associates AHCYL1 with the CPSF complex and RNA. Interacts with PAPOLA; the interaction seems to be increased by the interaction with AHCYL1. Interacts with NUDT21/CPSF5; this interaction occurs in a RNA sequence-specific manner. Interacts (preferentially via unphosphorylated form and Arg/Glu/Asp-rich domain) with CPSF6 (via Arg/Ser-rich domain); this interaction mediates, at least in part, the interaction between the CFIm and CPSF complexes and may be inhibited by CPSF6 hyper-phosphorylation. Interacts (preferentially via unphosphorylated form and Arg/Asp/Glu-rich domain) with CPSF7 (via Arg/Ser-rich domain); this interaction mediates, at least in part, the interaction between the CFIm and CPSF complexes and may be inhibited by CPSF7 hyper-phosphorylation.

The protein localises to the nucleus. Its function is as follows. Component of the cleavage and polyadenylation specificity factor (CPSF) complex that plays a key role in pre-mRNA 3'-end formation, recognizing the AAUAAA signal sequence and interacting with poly(A) polymerase and other factors to bring about cleavage and poly(A) addition. FIP1L1 contributes to poly(A) site recognition and stimulates poly(A) addition. Binds to U-rich RNA sequence elements surrounding the poly(A) site. May act to tether poly(A) polymerase to the CPSF complex. This chain is Pre-mRNA 3'-end-processing factor FIP1 (Fip1l1), found in Rattus norvegicus (Rat).